A 224-amino-acid chain; its full sequence is Lipoprotein-releasing system ATP-binding protein LolD (224 aa).

Residues 5–224 enclose the ABC transporter domain; sequence LVLDGLTKAY…VVRLEAGRVV (220 aa). An ATP-binding site is contributed by 42 to 49; sequence APSGAGKS.

Belongs to the ABC transporter superfamily. Lipoprotein translocase (TC 3.A.1.125) family. In terms of assembly, the complex is composed of two ATP-binding proteins (LolD) and two transmembrane proteins (LolC and LolE).

The protein localises to the cell inner membrane. Functionally, part of the ABC transporter complex LolCDE involved in the translocation of mature outer membrane-directed lipoproteins, from the inner membrane to the periplasmic chaperone, LolA. Responsible for the formation of the LolA-lipoprotein complex in an ATP-dependent manner. This Cereibacter sphaeroides (strain ATCC 17023 / DSM 158 / JCM 6121 / CCUG 31486 / LMG 2827 / NBRC 12203 / NCIMB 8253 / ATH 2.4.1.) (Rhodobacter sphaeroides) protein is Lipoprotein-releasing system ATP-binding protein LolD.